The primary structure comprises 333 residues: Acetyltransferase Pat (333 aa).

Residues 85–88 (GEIA), 95–96 (RT), and arginine 135 contribute to the 3',5'-cyclic AMP site. The N-acetyltransferase domain maps to 153–317 (FYLRPVLPGD…DTVPFEPELI (165 aa)). Residue glutamate 211 participates in Mg(2+) binding. Substrate is bound by residues 237–239 (FTV), 245–250 (GRGIGS), asparagine 276, and arginine 285.

Homodimer. It depends on Mg(2+) as a cofactor.

Its activity is regulated as follows. Allosterically regulated by cAMP. In terms of biological role, catalyzes specifically the acetylation of the epsilon-amino group of a highly conserved lysine residue in acetyl-CoA synthetase (ACS) and of the universal stress protein (USP) MSMEG_4207. Acetylation results in the inactivation of ACS activity and could be important for mycobacteria to adjust to environmental changes. This chain is Acetyltransferase Pat, found in Mycolicibacterium smegmatis (strain ATCC 700084 / mc(2)155) (Mycobacterium smegmatis).